A 289-amino-acid chain; its full sequence is 1D-myo-inositol 2-acetamido-2-deoxy-alpha-D-glucopyranoside deacetylase 1 (289 aa).

Zn(2+) is bound by residues H4, D7, and H140.

The protein belongs to the MshB deacetylase family. Zn(2+) serves as cofactor.

It carries out the reaction 1D-myo-inositol 2-acetamido-2-deoxy-alpha-D-glucopyranoside + H2O = 1D-myo-inositol 2-amino-2-deoxy-alpha-D-glucopyranoside + acetate. In terms of biological role, catalyzes the deacetylation of 1D-myo-inositol 2-acetamido-2-deoxy-alpha-D-glucopyranoside (GlcNAc-Ins) in the mycothiol biosynthesis pathway. The sequence is that of 1D-myo-inositol 2-acetamido-2-deoxy-alpha-D-glucopyranoside deacetylase 1 from Frankia alni (strain DSM 45986 / CECT 9034 / ACN14a).